A 95-amino-acid polypeptide reads, in one-letter code: DNA-binding protein CENSYa_1764 (95 aa).

The tract at residues 1 to 21 (MSYTDPDDSLPEHVPGEAEMS) is disordered.

The protein belongs to the PDCD5 family.

The protein is DNA-binding protein CENSYa_1764 of Cenarchaeum symbiosum (strain A).